A 315-amino-acid chain; its full sequence is tRNA pseudouridine synthase B (315 aa).

Asp47 serves as the catalytic Nucleophile.

This sequence belongs to the pseudouridine synthase TruB family. Type 1 subfamily.

It catalyses the reaction uridine(55) in tRNA = pseudouridine(55) in tRNA. In terms of biological role, responsible for synthesis of pseudouridine from uracil-55 in the psi GC loop of transfer RNAs. This is tRNA pseudouridine synthase B from Shewanella pealeana (strain ATCC 700345 / ANG-SQ1).